A 214-amino-acid chain; its full sequence is DNA-directed RNA polymerase subunit alpha (214 aa).

Belongs to the RNA polymerase alpha chain family. As to quaternary structure, in plastids the minimal PEP RNA polymerase catalytic core is composed of four subunits: alpha, beta, beta', and beta''. When a (nuclear-encoded) sigma factor is associated with the core the holoenzyme is formed, which can initiate transcription.

It localises to the plastid. Its subcellular location is the chloroplast. The enzyme catalyses RNA(n) + a ribonucleoside 5'-triphosphate = RNA(n+1) + diphosphate. In terms of biological role, DNA-dependent RNA polymerase catalyzes the transcription of DNA into RNA using the four ribonucleoside triphosphates as substrates. This is DNA-directed RNA polymerase subunit alpha (rpoA) from Euglena viridis (Cercaria viridis).